The sequence spans 235 residues: MDPARPLGLSILLLFLTEAALGDAAQEPTGNNAEICLLPLDYGPCRALLLRYYYDRYTQSCRQFLYGGCEGNANNFYTWEACDDACWRIEKVPKVCRLQVSVDDQCEGSTEKYFFNLSSMTCEKFFSGGCHRNRIENRFPDEATCMGFCAPKKIPSFCYSPKDEGLCSANVTRYYFNPRYRTCDAFTYTGCGGNDNNFVSREDCKRACAKALKKKKKMPKLRFASRIRKIRKKQF.

Positions M1 to G22 are cleaved as a signal peptide. 3 BPTI/Kunitz inhibitor domains span residues C36 to C86, C96 to C149, and C158 to C208. Cystine bridges form between C36–C86, C45–C69, C61–C82, C96–C149, C106–C130, C122–C145, C158–C208, C167–C191, and C183–C204. A glycan (N-linked (GlcNAc...) asparagine) is linked at N116. Residue N170 is glycosylated (N-linked (GlcNAc...) asparagine).

In terms of assembly, finds in a complex with ABCB1, TFPI2 and PPP2R3C; leading to the dephosphorylation of ABCB1. Umbilical vein endothelial cells, liver, placenta, heart, pancreas, and maternal serum at advanced pregnancy.

Its subcellular location is the secreted. Its function is as follows. May play a role in the regulation of plasmin-mediated matrix remodeling. Inhibits trypsin, plasmin, factor VIIa/tissue factor and weakly factor Xa. Has no effect on thrombin. This Homo sapiens (Human) protein is Tissue factor pathway inhibitor 2 (TFPI2).